We begin with the raw amino-acid sequence, 220 residues long: MGRLRKDYQDELRLFNSQEFYVLNPNQYKGLWNQQIFKNNNNIEIEVGTGKGTFIFNKALKNKNINFIAIDKYPTILAKLLNKLESCSETLTNIKIISIDAKNINDIFDKSEISKIYLNFVDPWPKTHHEKFRLTNSFYLNLFLPLLKQDGLIEFKTDNLNFFNYSLSVARENSFCLTFATKNLYSSAHAKDNIQTEYERKWSNRGYKINKLVIKNNISQ.

Positions 46, 71, 100, and 122 each coordinate S-adenosyl-L-methionine. Residue aspartate 122 is part of the active site. Residues lysine 126, aspartate 158, and 196 to 199 (TEYE) each bind substrate.

Belongs to the class I-like SAM-binding methyltransferase superfamily. TrmB family.

The catalysed reaction is guanosine(46) in tRNA + S-adenosyl-L-methionine = N(7)-methylguanosine(46) in tRNA + S-adenosyl-L-homocysteine. It functions in the pathway tRNA modification; N(7)-methylguanine-tRNA biosynthesis. Catalyzes the formation of N(7)-methylguanine at position 46 (m7G46) in tRNA. The chain is tRNA (guanine-N(7)-)-methyltransferase from Malacoplasma penetrans (strain HF-2) (Mycoplasma penetrans).